The sequence spans 229 residues: Potassium/proton antiporter CemA (229 aa).

3 helical membrane-spanning segments follow: residues 6–26 (AFIP…ISLC), 107–127 (ILHF…SFWA), and 189–209 (ILSG…KYWI).

This sequence belongs to the CemA family.

Its subcellular location is the plastid. It localises to the chloroplast inner membrane. The catalysed reaction is K(+)(in) + H(+)(out) = K(+)(out) + H(+)(in). In terms of biological role, contributes to K(+)/H(+) antiport activity by supporting proton efflux to control proton extrusion and homeostasis in chloroplasts in a light-dependent manner to modulate photosynthesis. Prevents excessive induction of non-photochemical quenching (NPQ) under continuous-light conditions. Indirectly promotes efficient inorganic carbon uptake into chloroplasts. The chain is Potassium/proton antiporter CemA from Crucihimalaya wallichii (Rock-cress).